A 209-amino-acid polypeptide reads, in one-letter code: CASP-like protein 1A1 (209 aa).

The tract at residues 1–26 (MEEAKHNEAEEAQGIEAREAKQIEAG) is disordered. At 1–49 (MEEAKHNEAEEAQGIEAREAKQIEAGETSRSSRKLITFEPKLVINKGIS) the chain is on the cytoplasmic side. The chain crosses the membrane as a helical span at residues 50–70 (VLGFVLRLFAVFGTIGSALAM). Residues 71 to 95 (GTTHESVVSLSQLVLLKVKYSDLPT) lie on the Extracellular side of the membrane. Residues 96–116 (LMFFVVANAISGGYLVLSLPV) traverse the membrane as a helical segment. At 117 to 130 (SIFHIFSTQAKTSR) the chain is on the cytoplasmic side. The chain crosses the membrane as a helical span at residues 131-151 (IILLVVDTVMLALVSSGASAA). At 152–183 (TATVYLAHEGNTTANWPPICQQFDGFCERISG) the chain is on the extracellular side. Residue Asn162 is glycosylated (N-linked (GlcNAc...) asparagine). Residues 184–204 (SLIGSFCAVILLMLIVINSAI) traverse the membrane as a helical segment. Topologically, residues 205–209 (SLSRH) are cytoplasmic.

This sequence belongs to the Casparian strip membrane proteins (CASP) family. Homodimer and heterodimers. In terms of tissue distribution, expressed in the root endodermis.

It is found in the cell membrane. The polypeptide is CASP-like protein 1A1 (Arabidopsis thaliana (Mouse-ear cress)).